We begin with the raw amino-acid sequence, 476 residues long: Bifunctional protein HldE (476 aa).

A ribokinase region spans residues 1-318; the sequence is MLSKKPNILV…EYESSLHKSN (318 aa). 195-198 serves as a coordination point for ATP; sequence NKKE. Asp263 is an active-site residue. The segment at 345-476 is cytidylyltransferase; the sequence is FTNGCFDILH…RIQENEKCNN (132 aa).

It in the N-terminal section; belongs to the carbohydrate kinase PfkB family. This sequence in the C-terminal section; belongs to the cytidylyltransferase family. Homodimer.

It carries out the reaction D-glycero-beta-D-manno-heptose 7-phosphate + ATP = D-glycero-beta-D-manno-heptose 1,7-bisphosphate + ADP + H(+). It catalyses the reaction D-glycero-beta-D-manno-heptose 1-phosphate + ATP + H(+) = ADP-D-glycero-beta-D-manno-heptose + diphosphate. The protein operates within nucleotide-sugar biosynthesis; ADP-L-glycero-beta-D-manno-heptose biosynthesis; ADP-L-glycero-beta-D-manno-heptose from D-glycero-beta-D-manno-heptose 7-phosphate: step 1/4. It participates in nucleotide-sugar biosynthesis; ADP-L-glycero-beta-D-manno-heptose biosynthesis; ADP-L-glycero-beta-D-manno-heptose from D-glycero-beta-D-manno-heptose 7-phosphate: step 3/4. Its function is as follows. Catalyzes the phosphorylation of D-glycero-D-manno-heptose 7-phosphate at the C-1 position to selectively form D-glycero-beta-D-manno-heptose-1,7-bisphosphate. In terms of biological role, catalyzes the ADP transfer from ATP to D-glycero-beta-D-manno-heptose 1-phosphate, yielding ADP-D-glycero-beta-D-manno-heptose. This is Bifunctional protein HldE from Aliarcobacter butzleri (strain RM4018) (Arcobacter butzleri).